Reading from the N-terminus, the 133-residue chain is Ribosome-binding factor A (133 aa).

This sequence belongs to the RbfA family. In terms of assembly, monomer. Binds 30S ribosomal subunits, but not 50S ribosomal subunits or 70S ribosomes.

It is found in the cytoplasm. One of several proteins that assist in the late maturation steps of the functional core of the 30S ribosomal subunit. Associates with free 30S ribosomal subunits (but not with 30S subunits that are part of 70S ribosomes or polysomes). Required for efficient processing of 16S rRNA. May interact with the 5'-terminal helix region of 16S rRNA. This Shigella boydii serotype 18 (strain CDC 3083-94 / BS512) protein is Ribosome-binding factor A.